Consider the following 122-residue polypeptide: Small ribosomal subunit protein uS13 (122 aa).

Positions 99-122 (RGQRTHTNARTRKGPAKAIAGKKK) are disordered.

Belongs to the universal ribosomal protein uS13 family. Part of the 30S ribosomal subunit. Forms a loose heterodimer with protein S19. Forms two bridges to the 50S subunit in the 70S ribosome.

Its function is as follows. Located at the top of the head of the 30S subunit, it contacts several helices of the 16S rRNA. In the 70S ribosome it contacts the 23S rRNA (bridge B1a) and protein L5 of the 50S subunit (bridge B1b), connecting the 2 subunits; these bridges are implicated in subunit movement. Contacts the tRNAs in the A and P-sites. This Bradyrhizobium diazoefficiens (strain JCM 10833 / BCRC 13528 / IAM 13628 / NBRC 14792 / USDA 110) protein is Small ribosomal subunit protein uS13.